We begin with the raw amino-acid sequence, 144 residues long: Large ribosomal subunit protein eL27 (144 aa).

The 38-residue stretch at Ile6–His43 folds into the KOW domain.

This sequence belongs to the eukaryotic ribosomal protein eL27 family.

This chain is Large ribosomal subunit protein eL27 (rpl27), found in Dictyostelium discoideum (Social amoeba).